A 503-amino-acid chain; its full sequence is Cell wall integrity and stress response component 2 (503 aa).

Positions 1–23 (MHLDLIHKSFILVWLIYIRAALA) are cleaved as a signal peptide. Topologically, residues 24–325 (DQFTYKACYS…KGLSGGAIAG (302 aa)) are extracellular. Positions 25-118 (QFTYKACYSA…SSAMNVYINN (94 aa)) constitute a WSC domain. The tract at residues 124 to 260 (DSTSSTATST…STPSSTSIGT (137 aa)) is disordered. The helical transmembrane segment at 326–346 (VVVGVVCGTVALLALALFFFV) threads the bilayer. The Cytoplasmic segment spans residues 347-503 (WKKRRQSSQH…AKDSNNSSLR (157 aa)). Residue Thr402 is modified to Phosphothreonine. Ser455 and Ser458 each carry phosphoserine. Residues 470–503 (IVNPDNVSSNIGSNVSDGDDDYDDAKDSNNSSLR) form a disordered region.

In terms of processing, N-glycosylated.

Its subcellular location is the cell membrane. The protein is Cell wall integrity and stress response component 2 (WSC2) of Saccharomyces cerevisiae (strain ATCC 204508 / S288c) (Baker's yeast).